Reading from the N-terminus, the 465-residue chain is 28S rRNA (cytosine-C(5))-methyltransferase (465 aa).

The residue at position 2 (Gly2) is an N-acetylglycine. Ser167 carries the post-translational modification Phosphoserine. S-adenosyl-L-methionine is bound by residues 234–240 (CAAPGNK), Asp258, Arg263, and Asp305. Cys359 acts as the Nucleophile in catalysis. Positions 430 to 465 (TPAPQTDAMDPEPLSQVPKRKRRRKAAVGASMQPST) are disordered.

It belongs to the class I-like SAM-binding methyltransferase superfamily. RsmB/NOP family. As to expression, in the hippocampus, specifically expressed in adult hippocampal NG2-positive oligodendrocyte precursor cells (at protein level).

Its subcellular location is the nucleus. The protein resides in the nucleolus. The enzyme catalyses a cytidine in 28S rRNA + S-adenosyl-L-methionine = a 5-methylcytidine in 28S rRNA + S-adenosyl-L-homocysteine + H(+). Its function is as follows. S-adenosyl-L-methionine-dependent methyltransferase that specifically methylates the C(5) position of cytosine 3438 (m5C3438) in 28S rRNA. m5C3782 promotes protein translation without affecting ribosome biogenesis and fidelity. Required for corpus callosum and cerebral cortex development. The protein is 28S rRNA (cytosine-C(5))-methyltransferase of Mus musculus (Mouse).